We begin with the raw amino-acid sequence, 407 residues long: Probable endo-beta-1,4-glucanase celB (407 aa).

The signal sequence occupies residues 1–18 (MALTLAATALVLLPLVTA). Residue asparagine 136 is glycosylated (N-linked (GlcNAc...) asparagine). The active-site Nucleophile is the glutamate 216. The active-site Proton donor is glutamate 221.

Belongs to the glycosyl hydrolase 7 (cellulase C) family.

It is found in the secreted. It carries out the reaction Endohydrolysis of (1-&gt;4)-beta-D-glucosidic linkages in cellulose, lichenin and cereal beta-D-glucans.. In terms of biological role, has endoglucanase activity on substrates containing beta-1,4 glycosidic bonds, like in carboxymethylcellulose (CMC), hydroxyethylcellulose (HEC) and beta-glucan. Involved in the degradation of complex natural cellulosic substrates. In Neosartorya fischeri (strain ATCC 1020 / DSM 3700 / CBS 544.65 / FGSC A1164 / JCM 1740 / NRRL 181 / WB 181) (Aspergillus fischerianus), this protein is Probable endo-beta-1,4-glucanase celB (celB).